The following is a 1556-amino-acid chain: MSLAKLLNNDDDDNNINLPNINVNNTNTNDTSSSIVTNTHTTNTTTNLQKEKFLNKLNNDFNLLNKRDNLELNYQDWKFLNYQEFELLNEWNQQSKEWNNSIKNFEYLYSLMKKYKSEWENYLTLKSSDKYLKNVVNDCLINSNTNNLKSKSKLKTDTKTKAKSKSKSKLKLKSNSDAKVKSKSSNAKAKAKTKSVSTQQKRKRTTSIKNLLEKEDSALTSLDDMDEIDDVNEILNNDNNDEITQNSKDLSTTTATEKKLNTKTSPSKKRKDEVRVAMKKPMTSTPNVKTENKSKQKSNKKNIDADDNTYDDNNLINGKDTEELDDIEKAKDLEDNTDIEIEGTNENEDEDEDEDEDEDEDEEDEEEGEEEEEEEEDEEGVINMIENEDDEDYFAPGKKSGRQNASKVAGEPAAPVPKTPTTIHSDRERIVRELIKMCNKNKNKKSRKRRFTNSIVTDYNPEENKLIVKVTLKQYHVRKLKKLINDAKKLREEEEMKLKKSLMKEAENAEELEGPSSKKKKLNSGTAQNENGGEQNSEFIQNTHDLPTYGMQMTLKEAKAIKRHYDNTFFTILKDLARKDSAKMARLVQQIQSIRATNFKKNSSVCAREARKWQQRNFKQVKDFQTRARRGIREMLNYWKKNEREERDLKKKAEKVAMEQARKEEEDRENVRQAKKLNFLLTQTELYSHFIGSKIKTNELEGNMKDDEFDENEDNLMNNIDLDSTSSVKTDFKTIDFDNEDDDELRRKAAQNASNVLQKSREKTKKFDNDTSNGEELNFQNPTSLGEVVIEQPSILACTLKEYQLKGLNWLANLYDQGINGILADEMGLGKTVQSISVLAHLAEKYNIWGPFLVVTPASTLHNWVNEISKFVPQFKILPYWGNSNDRKILRRFWDRKNLRYNKDSPFHVMITSYQMVVSDTSYLQKMKWQYMILDEAQAIKSSQSSRWRNLLSFHCRNRLLLTGTPIQNNMQELWALLHFIMPSLFDSHDEFNDWFSKDIESHAEANTKLNQQQLRRLHMILKPFMLRRVKKNVQSELGDKIEIDVMCDLTQRQAKLYQILKSQMSTNYDVIENAAGDDDTGSDQNMINAVMQFRKVCNHPDLFERADVDSPFSFSIFGKSSSLSRDNEPLVDILYSTRNPITYHLPRLIYNDLILPNYENDLGLKNKLLNYTFSIFNNESTCKEISRVTGLTYGEIKRVVHRDLLMNAIHLKEPYSRQTFLEKISVIEDNDKTFSDMNFKSNLKLIERSAKLDALSRVTSTGVLNSLLNIKEQVFDNEYYNAISRSYHPNVSSSPVSIQVLGNRHFSIQQEEELFKPVISKALSEIPASTQYNMAVEKKIPLHDFPVSGLYPSPLNKSFSSYISMPSMDRFITESAKLKKLDELLVELKKGDHRVLIYFQMTKMMDLMEEYLTYRQYSHIRLDGSSKLEDRRDLVHDWQTRPDIFIFLLSTRAGGLGINLTAADTVIFYDSDWNPTIDSQAMDRAHRLGQTRQVTVYRLLIRGTIEERMRDRAKQKEHVQQVVMEGKTLQKDVKTIESGGDVKAAAAASTALTTN.

3 disordered regions span residues 153-209 (KLKT…TSIK), 236-426 (NNDN…IHSD), and 502-538 (LMKE…QNSE). T156 is modified (phosphothreonine). Positions 161–172 (KAKSKSKSKLKL) are enriched in basic residues. Over residues 181–198 (KSKSSNAKAKAKTKSVST) the composition is skewed to low complexity. Residues 244-255 (TQNSKDLSTTTA) are compositionally biased toward polar residues. Acidic residues predominate over residues 335 to 393 (DNTDIEIEGTNENEDEDEDEDEDEDEDEEDEEEGEEEEEEEEDEEGVINMIENEDDEDY). Residues 523–538 (NSGTAQNENGGEQNSE) are compositionally biased toward polar residues. The region spanning 572-697 (ILKDLARKDS…SHFIGSKIKT (126 aa)) is the DBINO domain. Positions 751–779 (QNASNVLQKSREKTKKFDNDTSNGEELNF) are disordered. Over residues 759-769 (KSREKTKKFDN) the composition is skewed to basic and acidic residues. The segment covering 770–779 (DTSNGEELNF) has biased composition (polar residues). The Helicase ATP-binding domain maps to 812–984 (ANLYDQGING…WALLHFIMPS (173 aa)). 825-832 (DEMGLGKT) is a binding site for ATP. Positions 935–938 (DEAQ) match the DEAQ box motif. Positions 1381–1535 (KLDELLVELK…EGKTLQKDVK (155 aa)) constitute a Helicase C-terminal domain.

The protein belongs to the SNF2/RAD54 helicase family. As to quaternary structure, component of the INO80 chromatin-remodeling complex.

The protein localises to the nucleus. It carries out the reaction ATP + H2O = ADP + phosphate + H(+). ATPase component of the INO80 complex which remodels chromatin by shifting nucleosomes and is involved in DNA repair. This Vanderwaltozyma polyspora (strain ATCC 22028 / DSM 70294 / BCRC 21397 / CBS 2163 / NBRC 10782 / NRRL Y-8283 / UCD 57-17) (Kluyveromyces polysporus) protein is Chromatin-remodeling ATPase INO80 (INO80).